The sequence spans 921 residues: Bifunctional aspartokinase/homoserine dehydrogenase, chloroplastic (921 aa).

The transit peptide at 1–87 (SLSSAISPSS…DDSVEKVHLP (87 aa)) directs the protein to the chloroplast. An aspartokinase region spans residues 88 to 339 (RGAMWSIHKF…VSEAVVLKTL (252 aa)). The segment at 340–567 (SYQEAWEMSY…LSRTTIAVGI (228 aa)) is interface. 2 ACT domains span residues 417 to 489 (VEGT…QVAN) and 498 to 575 (TVGQ…LIGA). A homoserine dehydrogenase region spans residues 568 to 921 (VGPGLIGATL…RLASYLGAPS (354 aa)). Isoleucine 573 lines the NAD(+) pocket. NADP(+) is bound by residues isoleucine 573, arginine 605, threonine 654, and lysine 678. An NADPH-binding site is contributed by isoleucine 573. Threonine 654 contacts NAD(+). Residues threonine 654 and lysine 678 each coordinate NADPH. Positions 705, 708, 710, and 712 each coordinate Na(+). Positions 763 and 766 each coordinate NADP(+). Glutamate 766 and aspartate 777 together coordinate L-homoserine. The Proton donor role is filled by lysine 781. NAD(+) is bound at residue glycine 898. Position 898 (glycine 898) interacts with NADP(+). Residue glycine 898 participates in NADPH binding.

In the N-terminal section; belongs to the aspartokinase family. This sequence in the C-terminal section; belongs to the homoserine dehydrogenase family. The cofactor is a metal cation.

The protein localises to the plastid. The protein resides in the chloroplast. The catalysed reaction is L-homoserine + NADP(+) = L-aspartate 4-semialdehyde + NADPH + H(+). It carries out the reaction L-homoserine + NAD(+) = L-aspartate 4-semialdehyde + NADH + H(+). It catalyses the reaction L-aspartate + ATP = 4-phospho-L-aspartate + ADP. Its pathway is amino-acid biosynthesis; L-lysine biosynthesis via DAP pathway; (S)-tetrahydrodipicolinate from L-aspartate: step 1/4. It participates in amino-acid biosynthesis; L-methionine biosynthesis via de novo pathway; L-homoserine from L-aspartate: step 1/3. The protein operates within amino-acid biosynthesis; L-methionine biosynthesis via de novo pathway; L-homoserine from L-aspartate: step 3/3. It functions in the pathway amino-acid biosynthesis; L-threonine biosynthesis; L-threonine from L-aspartate: step 1/5. Its pathway is amino-acid biosynthesis; L-threonine biosynthesis; L-threonine from L-aspartate: step 3/5. Functionally, bifunctional aspartate kinase and homoserine dehydrogenase that catalyzes the first and the third steps toward the synthesis of lysine, methionine and threonine from aspartate. In Daucus carota (Wild carrot), this protein is Bifunctional aspartokinase/homoserine dehydrogenase, chloroplastic.